A 525-amino-acid polypeptide reads, in one-letter code: Protein-export membrane protein SecD (525 aa).

The next 6 membrane-spanning stretches (helical) occupy residues 16 to 36 (VLLL…KGLT), 368 to 388 (QAII…YFHY), 395 to 415 (IPVA…AALI), 421 to 441 (LPSI…QIVI), 466 to 486 (AFFI…FLLV), and 488 to 508 (FVGT…IGVL).

Belongs to the SecD/SecF family. SecD subfamily. Part of the protein translocation apparatus. Forms a complex with SecF.

It is found in the cell membrane. In terms of biological role, involved in protein export. The polypeptide is Protein-export membrane protein SecD (Thermococcus gammatolerans (strain DSM 15229 / JCM 11827 / EJ3)).